We begin with the raw amino-acid sequence, 93 residues long: Small ribosomal subunit protein uS19 (93 aa).

Belongs to the universal ribosomal protein uS19 family.

Protein S19 forms a complex with S13 that binds strongly to the 16S ribosomal RNA. This Mycobacterium tuberculosis (strain ATCC 25177 / H37Ra) protein is Small ribosomal subunit protein uS19.